We begin with the raw amino-acid sequence, 1103 residues long: Centrosomal protein of 126 kDa (1103 aa).

Residues 1-12 (MLAGRPGAQSAG) are compositionally biased toward low complexity. The interval 1 to 36 (MLAGRPGAQSAGAGVGAGPPDAPGARDGGGRPRPGA) is disordered. Coiled-coil stretches lie at residues 43-116 (HLEK…FQRA) and 182-222 (QKHL…KLLE). 2 disordered regions span residues 380 to 409 (NTAE…ESPT) and 723 to 812 (ESKA…PGQS). Positions 723–735 (ESKAPVHASDSKT) are enriched in basic and acidic residues. The span at 736 to 748 (QKTKPQRGVKFTR) shows a compositional bias: basic residues. Composition is skewed to polar residues over residues 763-784 (RKPT…QTQG) and 798-812 (NIKS…PGQS).

In terms of assembly, interacts with DCTN1.

It is found in the midbody. It localises to the cytoplasm. The protein resides in the cytoskeleton. The protein localises to the microtubule organizing center. Its subcellular location is the centrosome. It is found in the cilium basal body. Participate in cytokinesis. Necessary for microtubules and mitotic spindle organization. Involved in primary cilium formation. This Mus musculus (Mouse) protein is Centrosomal protein of 126 kDa.